Reading from the N-terminus, the 229-residue chain is Heptahelical transmembrane protein ADIPOR2 (229 aa).

Over 1–4 (MQGA) the chain is Cytoplasmic. The chain crosses the membrane as a helical span at residues 5–25 (ASHDAAAAAAAAAVLGGGHGV). Residues 26–30 (PRWPR) lie on the Extracellular side of the membrane. A helical transmembrane segment spans residues 31–51 (MVFLVGAMTCLAISATAHLLA). The Cytoplasmic segment spans residues 52–66 (CHSRRASVVFWQLDY). A helical transmembrane segment spans residues 67–87 (AGISAMIVASFVPPVYYAFLC). The Extracellular segment spans residues 88-92 (HRPAR). A helical transmembrane segment spans residues 93–113 (VAYLSAISALGALVVGALLSP). At 114–124 (PCSSPRFRRLR) the chain is on the cytoplasmic side. A helical membrane pass occupies residues 125–145 (AALFLAMGLSGVVPALHALWL). The Extracellular portion of the chain corresponds to 146–153 (NWGHAACY). Residues 154–174 (LALSLEVAMGLAYAAGAWFYV) form a helical membrane-spanning segment. Residues 175–194 (SRVPEKWRPGVFDVVGHSHQ) are Cytoplasmic-facing. A helical transmembrane segment spans residues 195–215 (IFHVLVLVGAVTHYVAVDVLL). The Extracellular portion of the chain corresponds to 216 to 229 (NWRETVAAACSATS).

It belongs to the ADIPOR family.

The protein resides in the membrane. May play a role in abiotic stress response. The chain is Heptahelical transmembrane protein ADIPOR2 (ADIPOR2) from Oryza sativa subsp. japonica (Rice).